Consider the following 243-residue polypeptide: Carboxy-S-adenosyl-L-methionine synthase (243 aa).

Residues Tyr40, 65–67, 90–91, 118–119, Asn133, and Arg200 contribute to the S-adenosyl-L-methionine site; these read GCS, DN, and DI.

This sequence belongs to the class I-like SAM-binding methyltransferase superfamily. Cx-SAM synthase family. Homodimer.

The catalysed reaction is prephenate + S-adenosyl-L-methionine = carboxy-S-adenosyl-L-methionine + 3-phenylpyruvate + H2O. Functionally, catalyzes the conversion of S-adenosyl-L-methionine (SAM) to carboxy-S-adenosyl-L-methionine (Cx-SAM). In Shewanella putrefaciens (strain CN-32 / ATCC BAA-453), this protein is Carboxy-S-adenosyl-L-methionine synthase.